Reading from the N-terminus, the 234-residue chain is Ribonuclease HII (234 aa).

The RNase H type-2 domain occupies 16–207; it reads ALVAGVDEAG…VRRMLTPKAI (192 aa). A divalent metal cation contacts are provided by aspartate 22, glutamate 23, and aspartate 115.

The protein belongs to the RNase HII family. It depends on Mn(2+) as a cofactor. The cofactor is Mg(2+).

The protein resides in the cytoplasm. It carries out the reaction Endonucleolytic cleavage to 5'-phosphomonoester.. Its function is as follows. Endonuclease that specifically degrades the RNA of RNA-DNA hybrids. The chain is Ribonuclease HII from Xylella fastidiosa (strain M12).